The following is a 510-amino-acid chain: Metalloprotease TIKI homolog (510 aa).

Positions 1-30 (MQVKIVQVFPCLVLLVKLVLLSVLLPSATG) are cleaved as a signal peptide. Residues 31–489 (SYHCSNNATQ…FIPSASSGLR (459 aa)) are Extracellular-facing. Residues N37, N98, N108, N141, N223, N281, N322, N383, and N417 are each glycosylated (N-linked (GlcNAc...) asparagine). Residues 435 to 471 (TSLNSATASTTVATPTSSVTPPTSSSSQTRSLTISDS) are compositionally biased toward low complexity. Residues 435–477 (TSLNSATASTTVATPTSSVTPPTSSSSQTRSLTISDSQRTSDD) form a disordered region. Residues 490–510 (YNIGLVCVTLFFVLLIITSAL) traverse the membrane as a helical segment.

The protein belongs to the TIKI family. The cofactor is Mn(2+). Co(2+) serves as cofactor.

The protein resides in the membrane. Its function is as follows. Metalloprotease. This chain is Metalloprotease TIKI homolog, found in Amphimedon queenslandica (Sponge).